Here is a 155-residue protein sequence, read N- to C-terminus: Small ribosomal subunit protein uS7c (155 aa).

The protein belongs to the universal ribosomal protein uS7 family. In terms of assembly, part of the 30S ribosomal subunit.

The protein localises to the plastid. It is found in the chloroplast. In terms of biological role, one of the primary rRNA binding proteins, it binds directly to 16S rRNA where it nucleates assembly of the head domain of the 30S subunit. The protein is Small ribosomal subunit protein uS7c (rps7) of Ginkgo biloba (Ginkgo).